Reading from the N-terminus, the 265-residue chain is S-acyl fatty acid synthase thioesterase, medium chain (265 aa).

The residue at position 1 (methionine 1) is an N-acetylmethionine. Active-site residues include serine 101 and histidine 237.

Belongs to the thioesterase family. In terms of assembly, interacts (via C-terminus) with FASN. Detected both in lactating and non-lactating breast epithelium (at protein level). Isoform 2 is up-regulated in bone marrow-derived mononuclear cells of rheumatoid arthritis patients.

It localises to the cytoplasm. The protein resides in the cytosol. The enzyme catalyses (9Z)-octadecenoyl-[ACP] + H2O = (9Z)-octadecenoate + holo-[ACP] + H(+). It catalyses the reaction decanoyl-CoA + H2O = decanoate + CoA + H(+). The catalysed reaction is dodecanoyl-CoA + H2O = dodecanoate + CoA + H(+). It carries out the reaction tetradecanoyl-CoA + H2O = tetradecanoate + CoA + H(+). The enzyme catalyses hexadecanoyl-CoA + H2O = hexadecanoate + CoA + H(+). In terms of biological role, contributes to the release of free fatty acids from fatty acid synthase (FASN). Has broad substrate specificity, giving rise to a range of free fatty acids with chain lengths between 10 and 16 carbon atoms (C10 - C16). In Homo sapiens (Human), this protein is S-acyl fatty acid synthase thioesterase, medium chain.